The following is a 518-amino-acid chain: Probable bifunctional methylthioribulose-1-phosphate dehydratase/enolase-phosphatase E1 (518 aa).

Residues 1–242 (MACCGGGRGE…AIKLYQLGID (242 aa)) form a methylthioribulose-1-phosphate dehydratase region. C114 is a substrate binding site. The Zn(2+) site is built by H132 and H134. E157 (proton donor/acceptor; for methylthioribulose-1-phosphate dehydratase activity) is an active-site residue. H207 is a binding site for Zn(2+). Residues 279 to 518 (VVLDIEGTTT…FRTIKSFSEI (240 aa)) are enolase-phosphatase E1. Mg(2+) is bound by residues D282 and E284. Residues 417-418 (SS) and K451 each bind substrate. D477 serves as a coordination point for Mg(2+).

This sequence in the N-terminal section; belongs to the aldolase class II family. MtnB subfamily. In the C-terminal section; belongs to the HAD-like hydrolase superfamily. MasA/MtnC family. Zn(2+) serves as cofactor. Requires Mg(2+) as cofactor.

The enzyme catalyses 5-(methylsulfanyl)-D-ribulose 1-phosphate = 5-methylsulfanyl-2,3-dioxopentyl phosphate + H2O. The catalysed reaction is 5-methylsulfanyl-2,3-dioxopentyl phosphate + H2O = 1,2-dihydroxy-5-(methylsulfanyl)pent-1-en-3-one + phosphate. It participates in amino-acid biosynthesis; L-methionine biosynthesis via salvage pathway; L-methionine from S-methyl-5-thio-alpha-D-ribose 1-phosphate: step 2/6. The protein operates within amino-acid biosynthesis; L-methionine biosynthesis via salvage pathway; L-methionine from S-methyl-5-thio-alpha-D-ribose 1-phosphate: step 3/6. It functions in the pathway amino-acid biosynthesis; L-methionine biosynthesis via salvage pathway; L-methionine from S-methyl-5-thio-alpha-D-ribose 1-phosphate: step 4/6. This is Probable bifunctional methylthioribulose-1-phosphate dehydratase/enolase-phosphatase E1 from Oryza sativa subsp. indica (Rice).